The following is a 288-amino-acid chain: Protoheme IX farnesyltransferase (288 aa).

A run of 9 helical transmembrane segments spans residues 16–36, 37–57, 88–108, 111–131, 138–158, 162–182, 210–230, 236–256, and 265–285; these read VWSLLVFVGAIGAVIAIPYFN, LHYISLIVLATIAVMLGSMGA, INGLLFGLVLMFLSIAILAAF, LYAALFMGIGLFDNVFIYSYL, WNIILGGFSGGFPVVIGWYTV, FSILPWFLFLLVVVWIPIHVW, AICISSAAIILFAFSIIPAFF, VYMILASAIAVPMIFYSIVFV, and LKLFIYSSPYLAIIFVLVLIF.

The protein belongs to the UbiA prenyltransferase family. Protoheme IX farnesyltransferase subfamily.

Its subcellular location is the cell membrane. It catalyses the reaction heme b + (2E,6E)-farnesyl diphosphate + H2O = Fe(II)-heme o + diphosphate. Its pathway is porphyrin-containing compound metabolism; heme O biosynthesis; heme O from protoheme: step 1/1. Converts heme B (protoheme IX) to heme O by substitution of the vinyl group on carbon 2 of heme B porphyrin ring with a hydroxyethyl farnesyl side group. The sequence is that of Protoheme IX farnesyltransferase from Thermoplasma acidophilum (strain ATCC 25905 / DSM 1728 / JCM 9062 / NBRC 15155 / AMRC-C165).